A 234-amino-acid chain; its full sequence is Large ribosomal subunit protein uL1 (234 aa).

Belongs to the universal ribosomal protein uL1 family. As to quaternary structure, part of the 50S ribosomal subunit.

Functionally, binds directly to 23S rRNA. The L1 stalk is quite mobile in the ribosome, and is involved in E site tRNA release. Its function is as follows. Protein L1 is also a translational repressor protein, it controls the translation of the L11 operon by binding to its mRNA. This Psychromonas ingrahamii (strain DSM 17664 / CCUG 51855 / 37) protein is Large ribosomal subunit protein uL1.